The primary structure comprises 369 residues: 4-hydroxy-3-methylbut-2-en-1-yl diphosphate synthase (flavodoxin) (369 aa).

[4Fe-4S] cluster is bound by residues cysteine 270, cysteine 273, cysteine 305, and glutamate 312.

This sequence belongs to the IspG family. [4Fe-4S] cluster is required as a cofactor.

It carries out the reaction (2E)-4-hydroxy-3-methylbut-2-enyl diphosphate + oxidized [flavodoxin] + H2O + 2 H(+) = 2-C-methyl-D-erythritol 2,4-cyclic diphosphate + reduced [flavodoxin]. It participates in isoprenoid biosynthesis; isopentenyl diphosphate biosynthesis via DXP pathway; isopentenyl diphosphate from 1-deoxy-D-xylulose 5-phosphate: step 5/6. In terms of biological role, converts 2C-methyl-D-erythritol 2,4-cyclodiphosphate (ME-2,4cPP) into 1-hydroxy-2-methyl-2-(E)-butenyl 4-diphosphate. The polypeptide is 4-hydroxy-3-methylbut-2-en-1-yl diphosphate synthase (flavodoxin) (Pseudomonas entomophila (strain L48)).